Here is a 204-residue protein sequence, read N- to C-terminus: Shikimate kinase (204 aa).

A35 to T40 contacts ATP. A Mg(2+)-binding site is contributed by S39. D57, R81, and G103 together coordinate substrate. R142 provides a ligand contact to ATP. R169 is a substrate binding site.

Belongs to the shikimate kinase family. In terms of assembly, monomer. Mg(2+) serves as cofactor.

It is found in the cytoplasm. It catalyses the reaction shikimate + ATP = 3-phosphoshikimate + ADP + H(+). Its pathway is metabolic intermediate biosynthesis; chorismate biosynthesis; chorismate from D-erythrose 4-phosphate and phosphoenolpyruvate: step 5/7. Its function is as follows. Catalyzes the specific phosphorylation of the 3-hydroxyl group of shikimic acid using ATP as a cosubstrate. The chain is Shikimate kinase from Salinibacter ruber (strain DSM 13855 / M31).